The chain runs to 196 residues: Ribonuclease HII (196 aa).

One can recognise an RNase H type-2 domain in the interval 13 to 196 (LLVAGVDEAG…SFSPLKKKLF (184 aa)). A divalent metal cation contacts are provided by aspartate 19, glutamate 20, and aspartate 111.

It belongs to the RNase HII family. The cofactor is Mn(2+). Requires Mg(2+) as cofactor.

It is found in the cytoplasm. The enzyme catalyses Endonucleolytic cleavage to 5'-phosphomonoester.. Functionally, endonuclease that specifically degrades the RNA of RNA-DNA hybrids. The chain is Ribonuclease HII (rnhB) from Aquifex aeolicus (strain VF5).